The primary structure comprises 292 residues: Beta-lactamase-like protein 2 homolog (292 aa).

Zn(2+) is bound by residues His76, His78, Asp80, His81, His145, Asp163, and His198.

It belongs to the metallo-beta-lactamase superfamily. Glyoxalase II family.

This is Beta-lactamase-like protein 2 homolog from Drosophila melanogaster (Fruit fly).